The sequence spans 222 residues: Histidinol-phosphatase (222 aa).

D8 acts as the Nucleophile in catalysis. The Mg(2+) site is built by D8, D10, and D184. The active-site Proton donor is the D10.

The protein belongs to the HAD-like hydrolase superfamily. SerB family. Requires Mg(2+) as cofactor.

It catalyses the reaction L-histidinol phosphate + H2O = L-histidinol + phosphate. Its pathway is amino-acid biosynthesis; L-histidine biosynthesis; L-histidine from 5-phospho-alpha-D-ribose 1-diphosphate: step 8/9. In terms of biological role, catalyzes the dephosphorylation of histidinol-phosphate to histidinol, the direct precursor of histidine. This is Histidinol-phosphatase from Neisseria meningitidis serogroup C (strain 8013).